Consider the following 134-residue polypeptide: ATP synthase epsilon chain, chloroplastic (134 aa).

This sequence belongs to the ATPase epsilon chain family. In terms of assembly, F-type ATPases have 2 components, CF(1) - the catalytic core - and CF(0) - the membrane proton channel. CF(1) has five subunits: alpha(3), beta(3), gamma(1), delta(1), epsilon(1). CF(0) has three main subunits: a, b and c.

It is found in the plastid. It localises to the chloroplast thylakoid membrane. Its function is as follows. Produces ATP from ADP in the presence of a proton gradient across the membrane. This Nymphaea alba (White water-lily) protein is ATP synthase epsilon chain, chloroplastic.